A 393-amino-acid chain; its full sequence is S-adenosylmethionine synthase 1 (393 aa).

Position 9 (E9) interacts with Mg(2+). H15 provides a ligand contact to ATP. Residue E43 participates in K(+) binding. Residues E56 and Q99 each contribute to the L-methionine site. An S-nitrosocysteine modification is found at C114. Residues 167-169, 235-238, D246, 252-253, A269, K273, and K277 each bind ATP; these read DGK, SGRF, and RK. L-methionine is bound at residue D246. K277 lines the L-methionine pocket.

This sequence belongs to the AdoMet synthase family. Homotetramer. Interacts with GRF3. Mn(2+) serves as cofactor. The cofactor is Mg(2+). It depends on Co(2+) as a cofactor. K(+) is required as a cofactor. Post-translationally, S-nitrosylated in the presence of NO. The inhibition of SAM1 activity by S-nitrosylation could contribute to the cross-talk between ethylene and NO signaling. Highly expressed in stems and roots.

It is found in the cytoplasm. It carries out the reaction L-methionine + ATP + H2O = S-adenosyl-L-methionine + phosphate + diphosphate. The protein operates within amino-acid biosynthesis; S-adenosyl-L-methionine biosynthesis; S-adenosyl-L-methionine from L-methionine: step 1/1. With respect to regulation, reversibly inhibited by NO. Inhibited by 5,5'-dithiobis-2-nitrobenzoic acid (DTNB) and N-ethylmaleimide (NEM) (in vitro). Functionally, catalyzes the formation of S-adenosylmethionine from methionine and ATP. The reaction comprises two steps that are both catalyzed by the same enzyme: formation of S-adenosylmethionine (AdoMet) and triphosphate, and subsequent hydrolysis of the triphosphate. This is S-adenosylmethionine synthase 1 (SAM1) from Arabidopsis thaliana (Mouse-ear cress).